Here is a 1390-residue protein sequence, read N- to C-terminus: DNA-directed RNA polymerase III subunit RPC1 (1390 aa).

The Zn(2+) site is built by cysteine 69, cysteine 72, cysteine 79, histidine 82, cysteine 109, and cysteine 112. Lysine 144 contributes to the DNA binding site. Zn(2+) contacts are provided by cysteine 156 and cysteine 159. Residues lysine 167, serine 326, lysine 348, arginine 353, arginine 360, and arginine 366 each contribute to the DNA site. Residue lysine 445 is modified to N6-acetyllysine. Residue arginine 464 participates in RNA binding. The Mg(2+) site is built by aspartate 499, aspartate 501, and aspartate 503. Aspartate 503 lines the RNA pocket. The tract at residues 844 to 856 is bridging helix; the sequence is PTEFFFHTMAGRE. Arginine 1159, arginine 1305, and lysine 1323 together coordinate DNA.

This sequence belongs to the RNA polymerase beta' chain family. Component of the RNA polymerase III (Pol III) complex consisting of 17 subunits: a ten-subunit catalytic core composed of POLR3A/RPC1, POLR3B/RPC2, POLR1C/RPAC1, POLR1D/RPAC2, POLR3K/RPC10, POLR2E/RPABC1, POLR2F/RPABC2, POLR2H/RPABC3, POLR2K/RPABC4 and POLR2L/RPABC5; a mobile stalk composed of two subunits POLR3H/RPC8 and CRCP/RPC9, protruding from the core and functioning primarily in transcription initiation; and additional subunits homologous to general transcription factors of the RNA polymerase II machinery, POLR3C/RPC3-POLR3F/RPC6-POLR3G/RPC7 heterotrimer required for transcription initiation and POLR3D/RPC4-POLR3E/RPC5 heterodimer involved in both transcription initiation and termination. As part of the RNA polymerase III complex, interacts with PKP2. It depends on Mg(2+) as a cofactor.

The protein resides in the nucleus. It localises to the cytoplasm. Its subcellular location is the cytosol. The catalysed reaction is RNA(n) + a ribonucleoside 5'-triphosphate = RNA(n+1) + diphosphate. Its function is as follows. Catalytic core component of RNA polymerase III (Pol III), a DNA-dependent RNA polymerase which synthesizes small non-coding RNAs using the four ribonucleoside triphosphates as substrates. Synthesizes 5S rRNA, snRNAs, tRNAs and miRNAs from at least 500 distinct genomic loci. Pol III-mediated transcription cycle proceeds through transcription initiation, transcription elongation and transcription termination stages. During transcription initiation, Pol III is recruited to DNA promoters type I, II or III with the help of general transcription factors and other specific initiation factors. Once the polymerase has escaped from the promoter it enters the elongation phase during which RNA is actively polymerized, based on complementarity with the template DNA strand. Transcription termination involves the release of the RNA transcript and polymerase from the DNA. Forms Pol III active center together with the second largest subunit POLR3B/RPC2. Appends one nucleotide at a time to the 3' end of the nascent RNA, with POLR3A/RPC1 contributing a Mg(2+)-coordinating DxDGD motif, and POLR3B/RPC2 participating in the coordination of a second Mg(2+) ion and providing lysine residues believed to facilitate Watson-Crick base pairing between the incoming nucleotide and template base. Typically, Mg(2+) ions direct a 5' nucleoside triphosphate to form a phosphodiester bond with the 3' hydroxyl of the preceding nucleotide of the nascent RNA, with the elimination of pyrophosphate. Pol III plays a key role in sensing and limiting infection by intracellular bacteria and DNA viruses. Acts as a nuclear and cytosolic DNA sensor involved in innate immune response. Can sense non-self dsDNA that serves as template for transcription into dsRNA. The non-self RNA polymerase III transcripts, such as Epstein-Barr virus-encoded RNAs (EBERs) induce type I interferon and NF-kappa-B through the RIG-I pathway. This chain is DNA-directed RNA polymerase III subunit RPC1, found in Bos taurus (Bovine).